A 345-amino-acid polypeptide reads, in one-letter code: Holliday junction branch migration complex subunit RuvB (345 aa).

A large ATPase domain (RuvB-L) region spans residues 3–187; the sequence is LDILQNRNNL…FGFTARLDFY (185 aa). ATP-binding positions include Leu-26, Arg-27, Gly-68, Lys-71, Thr-72, Thr-73, 134-136, Arg-177, Tyr-187, and Arg-224; that span reads EDF. Thr-72 is a binding site for Mg(2+). Positions 188 to 259 are small ATPAse domain (RuvB-S); it reads SPEELLQVLI…IALKAMDVYE (72 aa). The head domain (RuvB-H) stretch occupies residues 262–345; sequence SLGLDRLDRA…EDLSGFELYL (84 aa). DNA is bound by residues Arg-317 and Arg-322.

Belongs to the RuvB family. As to quaternary structure, homohexamer. Forms an RuvA(8)-RuvB(12)-Holliday junction (HJ) complex. HJ DNA is sandwiched between 2 RuvA tetramers; dsDNA enters through RuvA and exits via RuvB. An RuvB hexamer assembles on each DNA strand where it exits the tetramer. Each RuvB hexamer is contacted by two RuvA subunits (via domain III) on 2 adjacent RuvB subunits; this complex drives branch migration. In the full resolvosome a probable DNA-RuvA(4)-RuvB(12)-RuvC(2) complex forms which resolves the HJ.

Its subcellular location is the cytoplasm. The enzyme catalyses ATP + H2O = ADP + phosphate + H(+). Functionally, the RuvA-RuvB-RuvC complex processes Holliday junction (HJ) DNA during genetic recombination and DNA repair, while the RuvA-RuvB complex plays an important role in the rescue of blocked DNA replication forks via replication fork reversal (RFR). RuvA specifically binds to HJ cruciform DNA, conferring on it an open structure. The RuvB hexamer acts as an ATP-dependent pump, pulling dsDNA into and through the RuvAB complex. RuvB forms 2 homohexamers on either side of HJ DNA bound by 1 or 2 RuvA tetramers; 4 subunits per hexamer contact DNA at a time. Coordinated motions by a converter formed by DNA-disengaged RuvB subunits stimulates ATP hydrolysis and nucleotide exchange. Immobilization of the converter enables RuvB to convert the ATP-contained energy into a lever motion, pulling 2 nucleotides of DNA out of the RuvA tetramer per ATP hydrolyzed, thus driving DNA branch migration. The RuvB motors rotate together with the DNA substrate, which together with the progressing nucleotide cycle form the mechanistic basis for DNA recombination by continuous HJ branch migration. Branch migration allows RuvC to scan DNA until it finds its consensus sequence, where it cleaves and resolves cruciform DNA. The protein is Holliday junction branch migration complex subunit RuvB of Tropheryma whipplei (strain TW08/27) (Whipple's bacillus).